The chain runs to 360 residues: Phospho-N-acetylmuramoyl-pentapeptide-transferase (360 aa).

10 helical membrane passes run 25 to 45 (RGILGVLTALTLSLCLGPWMI), 73 to 93 (TMGGALILSSIGISTLLWADL), 97 to 117 (YVWVVLLVTFLFGAIGWVDDY), 135 to 155 (FWQSVFGLCAAIFLYTTAPSA), 170 to 190 (IPLGIGFIVLTYFVIVGSSNA), 199 to 219 (GLAIMPTVMVGGALGIFCYLS), 236 to 256 (AGELIVFSGALIGAGLGFLWF), 263 to 283 (VFMGDVGALALGAALGTMAVI), 288 to 308 (MVLFIMGGVFVMETLSVVIQV), and 338 to 358 (VIVRFWIITVILVLIGLATLK).

The protein belongs to the glycosyltransferase 4 family. MraY subfamily. Mg(2+) is required as a cofactor.

It localises to the cell inner membrane. It catalyses the reaction UDP-N-acetyl-alpha-D-muramoyl-L-alanyl-gamma-D-glutamyl-meso-2,6-diaminopimeloyl-D-alanyl-D-alanine + di-trans,octa-cis-undecaprenyl phosphate = di-trans,octa-cis-undecaprenyl diphospho-N-acetyl-alpha-D-muramoyl-L-alanyl-D-glutamyl-meso-2,6-diaminopimeloyl-D-alanyl-D-alanine + UMP. It functions in the pathway cell wall biogenesis; peptidoglycan biosynthesis. Functionally, catalyzes the initial step of the lipid cycle reactions in the biosynthesis of the cell wall peptidoglycan: transfers peptidoglycan precursor phospho-MurNAc-pentapeptide from UDP-MurNAc-pentapeptide onto the lipid carrier undecaprenyl phosphate, yielding undecaprenyl-pyrophosphoryl-MurNAc-pentapeptide, known as lipid I. The protein is Phospho-N-acetylmuramoyl-pentapeptide-transferase of Pseudomonas syringae pv. syringae (strain B728a).